Consider the following 346-residue polypeptide: Uroporphyrinogen decarboxylase (346 aa).

Substrate-binding positions include arginine 26–arginine 30, aspartate 76, tyrosine 153, serine 208, and histidine 323.

This sequence belongs to the uroporphyrinogen decarboxylase family. As to quaternary structure, homodimer.

The protein localises to the cytoplasm. The enzyme catalyses uroporphyrinogen III + 4 H(+) = coproporphyrinogen III + 4 CO2. It participates in porphyrin-containing compound metabolism; protoporphyrin-IX biosynthesis; coproporphyrinogen-III from 5-aminolevulinate: step 4/4. Functionally, catalyzes the decarboxylation of four acetate groups of uroporphyrinogen-III to yield coproporphyrinogen-III. This chain is Uroporphyrinogen decarboxylase, found in Prochlorococcus marinus (strain MIT 9301).